The following is a 302-amino-acid chain: 4-hydroxy-tetrahydrodipicolinate synthase (302 aa).

Residue Thr-56 coordinates pyruvate. Tyr-145 serves as the catalytic Proton donor/acceptor. The Schiff-base intermediate with substrate role is filled by Lys-173. Val-215 contacts pyruvate.

This sequence belongs to the DapA family. In terms of assembly, homotetramer; dimer of dimers.

It is found in the cytoplasm. It carries out the reaction L-aspartate 4-semialdehyde + pyruvate = (2S,4S)-4-hydroxy-2,3,4,5-tetrahydrodipicolinate + H2O + H(+). It participates in amino-acid biosynthesis; L-lysine biosynthesis via DAP pathway; (S)-tetrahydrodipicolinate from L-aspartate: step 3/4. Catalyzes the condensation of (S)-aspartate-beta-semialdehyde [(S)-ASA] and pyruvate to 4-hydroxy-tetrahydrodipicolinate (HTPA). The polypeptide is 4-hydroxy-tetrahydrodipicolinate synthase (Prochlorococcus marinus subsp. pastoris (strain CCMP1986 / NIES-2087 / MED4)).